A 314-amino-acid polypeptide reads, in one-letter code: DegV domain-containing protein XCC3382 (314 aa).

Residues 3–307 (IGIVVDSACD…KGALAVAFAA (305 aa)) enclose the DegV domain. The hexadecanoate site is built by T63 and S96.

Functionally, may bind long-chain fatty acids, such as palmitate, and may play a role in lipid transport or fatty acid metabolism. This chain is DegV domain-containing protein XCC3382, found in Xanthomonas campestris pv. campestris (strain ATCC 33913 / DSM 3586 / NCPPB 528 / LMG 568 / P 25).